The sequence spans 323 residues: MAALIAENFRFLSLFFKSKDVMIFNGLVALGTVGSQELFSVVAFHCPCSPARNYLYGLAAIGVPALVLFIIGIILNNHTWNLVAECQHRRTKNCSAAPTFLLLSSILGRAAVAPVTWSVISLLRGEAYVCALSEFVDPSSLTAREEHFPSAHATEILARFPCKENPDNLSDFREEVSRRLRYESQLFGWLLIGVVAILVFLTKCLKHYCSPLSYRQEAYWAQYRANEDQLFQRTAEVHSRVLAANNVRRFFGFVALNKDDEELIANFPVEGTQPRPQWNAITGVYLYRENQGLPLYSRLHKWAQGLAGNGAAPDNVEMALLPS.

Over 1–21 (MAALIAENFRFLSLFFKSKDV) the chain is Cytoplasmic. The central pore stretch occupies residues 14 to 39 (LFFKSKDVMIFNGLVALGTVGSQELF). The chain crosses the membrane as a helical span at residues 22–43 (MIFNGLVALGTVGSQELFSVVA). Residues 44–52 (FHCPCSPAR) lie on the Extracellular side of the membrane. Intrachain disulfides connect Cys-46/Cys-130 and Cys-48/Cys-162. Residues 53–76 (NYLYGLAAIGVPALVLFIIGIILN) form a helical membrane-spanning segment. Over 77–101 (NHTWNLVAECQHRRTKNCSAAPTFL) the chain is Cytoplasmic. A helical transmembrane segment spans residues 102-132 (LLSSILGRAAVAPVTWSVISLLRGEAYVCAL). The Extracellular segment spans residues 133–179 (SEFVDPSSLTAREEHFPSAHATEILARFPCKENPDNLSDFREEVSRR). The hemichannel docking stretch occupies residues 145-152 (EEHFPSAH). Residues 180-206 (LRYESQLFGWLLIGVVAILVFLTKCLK) traverse the membrane as a helical segment. The Cytoplasmic portion of the chain corresponds to 207–323 (HYCSPLSYRQ…DNVEMALLPS (117 aa)). The intersubunit interaction stretch occupies residues 214-251 (YRQEAYWAQYRANEDQLFQRTAEVHSRVLAANNVRRFF).

This sequence belongs to the CALHM family. In terms of assembly, homo-undecamer. Two undecameric hemichannels can assemble in a head-to-head manner to form a gap junction. In terms of tissue distribution, placenta.

Its subcellular location is the cell membrane. It catalyses the reaction ATP(in) = ATP(out). Inhibited by Ca(2+) and ruthenium red in a voltage-dependent way. In terms of biological role, pore-forming subunit of Ca(2+) homeostasis modulator channels. Mediates ATP release from astrocytes and ATP-induced Ca(2+) influx in microglia thus regulating neuronal ATP and Ca(2+) homeostasis, synaptic transmission and neuroinflammatory response. May form intercellular gap junctions. The gating mechanism remains unknown. In Homo sapiens (Human), this protein is Calcium homeostasis modulator protein 2.